The sequence spans 49 residues: Large ribosomal subunit protein bL33 (49 aa).

It belongs to the bacterial ribosomal protein bL33 family.

The sequence is that of Large ribosomal subunit protein bL33 from Lactiplantibacillus plantarum (strain ATCC BAA-793 / NCIMB 8826 / WCFS1) (Lactobacillus plantarum).